The following is a 96-amino-acid chain: Integration host factor subunit alpha (96 aa).

It belongs to the bacterial histone-like protein family. Heterodimer of an alpha and a beta chain.

This protein is one of the two subunits of integration host factor, a specific DNA-binding protein that functions in genetic recombination as well as in transcriptional and translational control. The polypeptide is Integration host factor subunit alpha (Haemophilus influenzae (strain 86-028NP)).